Consider the following 169-residue polypeptide: Putative antitoxin Rv0268c (169 aa).

Basic residues predominate over residues 1 to 11 (MGTRSKSRTRQ). Residues 1–35 (MGTRSKSRTRQLKQSNGCTATTSGASDRRRRARRR) form a disordered region. Residues 120–153 (AAILISAERYESLMEELEDLRDRLSVHEREHVTM) adopt a coiled-coil conformation.

It belongs to the phD/YefM antitoxin family.

In terms of biological role, putative antitoxin component of a type II toxin-antitoxin (TA) system; however the expected toxin coding sequence is not found adjacent to this gene. This Mycobacterium tuberculosis (strain ATCC 25618 / H37Rv) protein is Putative antitoxin Rv0268c.